Reading from the N-terminus, the 740-residue chain is Catalase-peroxidase (740 aa).

A compositionally biased stretch (basic and acidic residues) spans 1–16 (MSENHDAIVTDAKTEE). A disordered region spans residues 1–38 (MSENHDAIVTDAKTEETDGCPVAHGRAPHPTQGGGNRQ). Positions 108-231 (WHSAGTYRIS…LGAVQMGLIY (124 aa)) form a cross-link, tryptophyl-tyrosyl-methioninium (Trp-Tyr) (with M-257). His-109 functions as the Proton acceptor in the catalytic mechanism. A cross-link (tryptophyl-tyrosyl-methioninium (Tyr-Met) (with W-108)) is located at residues 231-257 (YVNPEGPNGNPDPIAAARDIRETFRRM). Heme b is bound at residue His-272.

It belongs to the peroxidase family. Peroxidase/catalase subfamily. Homodimer. Requires heme b as cofactor. Formation of the three residue Trp-Tyr-Met cross-link is important for the catalase, but not the peroxidase activity of the enzyme.

The enzyme catalyses H2O2 + AH2 = A + 2 H2O. It catalyses the reaction 2 H2O2 = O2 + 2 H2O. Functionally, bifunctional enzyme with both catalase and broad-spectrum peroxidase activity. This is Catalase-peroxidase from Streptomyces coelicolor (strain ATCC BAA-471 / A3(2) / M145).